The primary structure comprises 445 residues: Histidinol dehydrogenase (445 aa).

Positions 138, 199, and 222 each coordinate NAD(+). Residues Ser245, Gln267, and His270 each coordinate substrate. 2 residues coordinate Zn(2+): Gln267 and His270. Active-site proton acceptor residues include Glu335 and His336. The substrate site is built by His336, Asp369, Glu423, and His428. Asp369 contributes to the Zn(2+) binding site. His428 contributes to the Zn(2+) binding site.

The protein belongs to the histidinol dehydrogenase family. It depends on Zn(2+) as a cofactor.

It carries out the reaction L-histidinol + 2 NAD(+) + H2O = L-histidine + 2 NADH + 3 H(+). The protein operates within amino-acid biosynthesis; L-histidine biosynthesis; L-histidine from 5-phospho-alpha-D-ribose 1-diphosphate: step 9/9. Functionally, catalyzes the sequential NAD-dependent oxidations of L-histidinol to L-histidinaldehyde and then to L-histidine. The sequence is that of Histidinol dehydrogenase from Burkholderia mallei (strain ATCC 23344).